The primary structure comprises 190 residues: Elongation factor P (190 aa).

Belongs to the elongation factor P family.

Its subcellular location is the cytoplasm. It participates in protein biosynthesis; polypeptide chain elongation. Functionally, involved in peptide bond synthesis. Stimulates efficient translation and peptide-bond synthesis on native or reconstituted 70S ribosomes in vitro. Probably functions indirectly by altering the affinity of the ribosome for aminoacyl-tRNA, thus increasing their reactivity as acceptors for peptidyl transferase. The sequence is that of Elongation factor P from Pseudomonas fluorescens (strain SBW25).